Reading from the N-terminus, the 420-residue chain is Histidine--tRNA ligase, chloroplastic (420 aa).

Belongs to the class-II aminoacyl-tRNA synthetase family.

The protein localises to the plastid. The protein resides in the chloroplast. It catalyses the reaction tRNA(His) + L-histidine + ATP = L-histidyl-tRNA(His) + AMP + diphosphate + H(+). The protein is Histidine--tRNA ligase, chloroplastic of Gracilaria tenuistipitata var. liui (Red alga).